The chain runs to 284 residues: Interferon antagonist OPG040 (284 aa).

ANK repeat units lie at residues 29–58 (HGHS…LKNL), 60–89 (ENEF…DDSQ), 93–122 (KGNT…RLMF), 127–157 (GWKT…TFDL), 159–188 (ILLS…STNT), and 193–222 (LFIP…NIYS).

This sequence belongs to the orthopoxvirus OPG039 family.

It localises to the host cytoplasm. The protein resides in the host nucleus. Inhibits antiviral activity induced by type I interferons. Does not block signal transduction of IFN, but is important to counter the host antiviral state induced by a pre-treatment with IFN. Plays a role in the inhibition of host NF-kappa-B activation by preventing the acetylation of the RELA/p65 subunit of NF-kappaB. In Bos taurus (Bovine), this protein is Interferon antagonist OPG040 (OPG039).